The following is a 217-amino-acid chain: Putative thymidylate synthase (217 aa).

Cys139 is an active-site residue.

The protein belongs to the thymidylate synthase family. Archaeal-type ThyA subfamily. In terms of assembly, monomer.

The protein resides in the cytoplasm. It participates in pyrimidine metabolism; dTTP biosynthesis. Functionally, may catalyze the biosynthesis of dTMP using an unknown cosubstrate. The sequence is that of Putative thymidylate synthase from Methanosarcina barkeri (strain Fusaro / DSM 804).